Here is a 274-residue protein sequence, read N- to C-terminus: Large ribosomal subunit protein uL2 (274 aa).

A disordered region spans residues 200-274; the sequence is HALEKSGKAG…SKYIIERRKK (75 aa). Basic residues-rich tracts occupy residues 207 to 220 and 255 to 274; these read KAGRSRWLGRRPRN and LKTRAPKKHSSKYIIERRKK.

This sequence belongs to the universal ribosomal protein uL2 family. As to quaternary structure, part of the 50S ribosomal subunit. Forms a bridge to the 30S subunit in the 70S ribosome.

Functionally, one of the primary rRNA binding proteins. Required for association of the 30S and 50S subunits to form the 70S ribosome, for tRNA binding and peptide bond formation. It has been suggested to have peptidyltransferase activity; this is somewhat controversial. Makes several contacts with the 16S rRNA in the 70S ribosome. The polypeptide is Large ribosomal subunit protein uL2 (Parabacteroides distasonis (strain ATCC 8503 / DSM 20701 / CIP 104284 / JCM 5825 / NCTC 11152)).